Here is a 447-residue protein sequence, read N- to C-terminus: Phosphoglucosamine mutase (447 aa).

The Phosphoserine intermediate role is filled by S100. The Mg(2+) site is built by S100, D240, D242, and D244. Residue S100 is modified to Phosphoserine.

Belongs to the phosphohexose mutase family. The cofactor is Mg(2+). In terms of processing, activated by phosphorylation.

It carries out the reaction alpha-D-glucosamine 1-phosphate = D-glucosamine 6-phosphate. In terms of biological role, catalyzes the conversion of glucosamine-6-phosphate to glucosamine-1-phosphate. In Clostridium botulinum (strain Eklund 17B / Type B), this protein is Phosphoglucosamine mutase.